The sequence spans 196 residues: dCTP deaminase, dUMP-forming (196 aa).

Residues 101–106 (KSSLGR), Asp119, 127–129 (TLE), Gln148, Tyr162, and Gln174 each bind dCTP. Glu129 acts as the Proton donor/acceptor in catalysis.

The protein belongs to the dCTP deaminase family. As to quaternary structure, homotrimer.

The catalysed reaction is dCTP + 2 H2O = dUMP + NH4(+) + diphosphate. It functions in the pathway pyrimidine metabolism; dUMP biosynthesis; dUMP from dCTP: step 1/1. Bifunctional enzyme that catalyzes both the deamination of dCTP to dUTP and the hydrolysis of dUTP to dUMP without releasing the toxic dUTP intermediate. This chain is dCTP deaminase, dUMP-forming, found in Tropheryma whipplei (strain TW08/27) (Whipple's bacillus).